A 250-amino-acid polypeptide reads, in one-letter code: 3-deoxy-manno-octulosonate cytidylyltransferase (250 aa).

The protein belongs to the KdsB family.

The protein resides in the cytoplasm. It catalyses the reaction 3-deoxy-alpha-D-manno-oct-2-ulosonate + CTP = CMP-3-deoxy-beta-D-manno-octulosonate + diphosphate. The protein operates within nucleotide-sugar biosynthesis; CMP-3-deoxy-D-manno-octulosonate biosynthesis; CMP-3-deoxy-D-manno-octulosonate from 3-deoxy-D-manno-octulosonate and CTP: step 1/1. Its pathway is bacterial outer membrane biogenesis; lipopolysaccharide biosynthesis. Functionally, activates KDO (a required 8-carbon sugar) for incorporation into bacterial lipopolysaccharide in Gram-negative bacteria. This chain is 3-deoxy-manno-octulosonate cytidylyltransferase, found in Legionella pneumophila (strain Lens).